A 252-amino-acid chain; its full sequence is 5-oxoprolinase subunit A 1 (252 aa).

It belongs to the LamB/PxpA family. As to quaternary structure, forms a complex composed of PxpA, PxpB and PxpC.

It catalyses the reaction 5-oxo-L-proline + ATP + 2 H2O = L-glutamate + ADP + phosphate + H(+). In terms of biological role, catalyzes the cleavage of 5-oxoproline to form L-glutamate coupled to the hydrolysis of ATP to ADP and inorganic phosphate. This chain is 5-oxoprolinase subunit A 1, found in Bordetella bronchiseptica (strain ATCC BAA-588 / NCTC 13252 / RB50) (Alcaligenes bronchisepticus).